The sequence spans 720 residues: ATP-dependent RNA helicase glh-3 (720 aa).

The segment covering 1-11 (MDKSPTKTSIR) has biased composition (polar residues). 2 disordered regions span residues 1–34 (MDKS…SCIK) and 125–180 (LNSR…SYGN). 2 stretches are compositionally biased toward basic and acidic residues: residues 141–154 (NVKE…RSDD) and 162–172 (SAKDEERDRDS). CCHC-type zinc fingers lie at residues 202-219 (NTCF…ECSA) and 222-239 (RECA…ECAS). Positions 298-326 (KSFSDSDIPQSMRRNVERAGYTRTTPIQQ) match the Q motif motif. In terms of domain architecture, Helicase ATP-binding spans 329 to 513 (LPLVADGKDI…RKLLREDYTM (185 aa)). 342–349 (AQTGSGKT) serves as a coordination point for ATP. A DEAD box motif is present at residues 456–459 (DEAD). The Helicase C-terminal domain occupies 549–698 (DIDTYTTEKN…VVPSWMKEAA (150 aa)). Positions 696-720 (EAAGGTSNPNKFEKSIDTEEPEEAW) are disordered.

The protein belongs to the DEAD box helicase family. DDX4/VASA subfamily. In terms of assembly, interacts with csn-5. Interacts (via C-terminus) with kgb-1. Interacts with zyx-1.

The protein resides in the cytoplasm. The enzyme catalyses ATP + H2O = ADP + phosphate + H(+). In terms of biological role, probable ATP-binding RNA helicase. The protein is ATP-dependent RNA helicase glh-3 of Caenorhabditis elegans.